We begin with the raw amino-acid sequence, 229 residues long: Cytochrome b6-f complex iron-sulfur subunit, chloroplastic (229 aa).

The transit peptide at 1 to 50 (MASSSLSPATQLGSSRSALMAMSSGLFVKPTKMNHQMVRKEKIGLRISCQ) directs the protein to the chloroplast. Residues 68–90 (LNLLLLGALSLPTGYMLVPYATF) form a helical membrane-spanning segment. Residues 115–211 (AAEWLKTHGP…ADIDEAGKVL (97 aa)) form the Rieske domain. The [2Fe-2S] cluster site is built by Cys157, His159, Cys175, and His178. Cys162 and Cys177 are oxidised to a cystine. At Ser196 the chain carries Phosphoserine.

The protein belongs to the Rieske iron-sulfur protein family. The 4 large subunits of the cytochrome b6-f complex are cytochrome b6, subunit IV (17 kDa polypeptide, petD), cytochrome f and the Rieske protein, while the 4 small subunits are petG, petL, petM and petN. The complex functions as a dimer. Interacts with PGRL1A. Component of a mitochondrial large protein complex that contains, at least, MIC60, DGS1, TOM40, TOM20 proteins, and petC/RISP. [2Fe-2S] cluster serves as cofactor. In terms of tissue distribution, confined to photosynthetic tissues, with highest levels in flowers. In leaves, mostly localized in mesophyll cells. In stems, confined to the peripheral ring of chlorenchyma and adjoining groups of cells associated with the vascular bundles. In siliques, present in green wall of the fruit and in peduncle but not in the translucide white septum of the seeds.

It localises to the plastid. The protein resides in the chloroplast thylakoid membrane. The protein localises to the mitochondrion inner membrane. It catalyses the reaction 2 oxidized [plastocyanin] + a plastoquinol + 2 H(+)(in) = 2 reduced [plastocyanin] + a plastoquinone + 4 H(+)(out). Essential protein for photoautotrophism. Confers resistance to photo-oxidative damages by contributing to the thermal dissipation of light energy and to lumenal acidification (increase of pH gradient). Component of the cytochrome b6-f complex, which mediates electron transfer between photosystem II (PSII) and photosystem I (PSI), cyclic electron flow around PSI, and state transitions. This chain is Cytochrome b6-f complex iron-sulfur subunit, chloroplastic, found in Arabidopsis thaliana (Mouse-ear cress).